A 733-amino-acid polypeptide reads, in one-letter code: MTDTLFDRRDIDALLGGRHPDPFACLGPHGEAGRTVVRALLPGALRVRAVTPGGDELGALACVDEAGCFAGTITHDGRYRLAIDWPDAQQVTDDAYAFGTLLDDAALARFAAGDPAAVLDCLGATPIRVDGVDGVRFAVWAPNAQRVSVVGNFNSWDGRRHPMRLRRPWGVWELFVPGIGPGEHYKYELCAADGSLLPHKADPCARATEAPPRTASVVADTAALDGFGWHDAGWIDARPDAGRRFRVPWSIYEVHAESWQRVPEEMDRSATWDELAERLIPYVKGMGFTHVEFMPISEYPFGGSWGYQPLAQFAPSARFGPVDGFARFVDRAHAAGIGVIVDWVPAHFPNDAHGLAQFDGSALYEHADPREGMHPDWNTCVFNLGRNEVSAFLIASALAWARRYHVDGIRVDAVASMLYRDYSRKEGEWVPNVYGGRENLESVAFLRTLNDALHGAAAPAGVVTIAEESTAWPGVTAPTGDGGLGFDFKWNMGWMHDTLAYLHEDPIHRRYHHDRMTFGLVYAFSERFVLPLSHDEVVHGKGSLAAKMPDDAWQRLATLRAYFGFMWAHPGKKLLFMGSEFAQWSEFAHDGTPHWDLLDAPAHRGVQRLVRDLNRAYASEPALHALDCDAAGFTWLIGDDRDNSVLAFARRDDSGRVVVAICNFTPVPRSGYRVGLPAPGQWRELMNTDAAVYGGSNAGNDGAVWAQDVPAHGQPWSATLRLPPLATLWLAPA.

Asp-412 (nucleophile) is an active-site residue. Residue Glu-467 is the Proton donor of the active site.

This sequence belongs to the glycosyl hydrolase 13 family. GlgB subfamily. As to quaternary structure, monomer.

It carries out the reaction Transfers a segment of a (1-&gt;4)-alpha-D-glucan chain to a primary hydroxy group in a similar glucan chain.. It functions in the pathway glycan biosynthesis; glycogen biosynthesis. Functionally, catalyzes the formation of the alpha-1,6-glucosidic linkages in glycogen by scission of a 1,4-alpha-linked oligosaccharide from growing alpha-1,4-glucan chains and the subsequent attachment of the oligosaccharide to the alpha-1,6 position. This Burkholderia vietnamiensis (strain G4 / LMG 22486) (Burkholderia cepacia (strain R1808)) protein is 1,4-alpha-glucan branching enzyme GlgB.